Here is a 179-residue protein sequence, read N- to C-terminus: CASP-like protein 5A2 (179 aa).

The Cytoplasmic segment spans residues 1-54 (MEATSHPAVHPVAVPPQFQGAGPPAIQMKDFPGSPGTAGGLALRFTQFGFSLIS). Transmembrane regions (helical) follow at residues 55–75 (LCIM…FLVA) and 76–96 (TMVF…YALL). Residues 97–114 (TQRSFRNPLIVSLFVVGD) are Cytoplasmic-facing. A helical membrane pass occupies residues 115 to 135 (WVTSTMTFAGACAAAGITVLI). Over 136 to 154 (DNDLEQCGPNHCGRFEAAA) the chain is Extracellular. Residues 155–175 (AMAFMSWTATTLSFCLSFWLL) traverse the membrane as a helical segment. At 176–179 (ASCR) the chain is on the cytoplasmic side.

This sequence belongs to the Casparian strip membrane proteins (CASP) family. As to quaternary structure, homodimer and heterodimers.

It is found in the cell membrane. In Physcomitrium patens (Spreading-leaved earth moss), this protein is CASP-like protein 5A2.